A 334-amino-acid polypeptide reads, in one-letter code: MNRWLRLGFACVGSIFLMFALAACKQEETLTKVKVAEVTHSIFYAPLYVAESKGFFKEEGLDVDVNTTWGGDKTMTSLLSNGSDIALVGSETSIYVEAQGAKDPVINFAQLTQTDGTFLVAREDVEHFDWDQLKGKTFLGQRKGGMPQMVGEYVLNKHKIDPHKDIDLIQNIDFANIANAFASGTGEYVQLFEPQASLFEKKGIGHIVASFGEESGEVPYTTFMAKQSYLKKNEDTAVKFTKAIYKAQQWVENHSAKDITDAIKDEFDDTDPDVIETSIERYKKQHSYSPDPLLNEKEWELLQTIMDKSGELPKHIPYNQLVNKEIAEKVTSEK.

A signal peptide spans Met1–Ala23. The N-palmitoyl cysteine moiety is linked to residue Cys24. Cys24 carries S-diacylglycerol cysteine lipidation.

It belongs to the bacterial solute-binding protein SsuA/TauA family.

The protein resides in the cell membrane. The chain is Putative binding protein YtlA (ytlA) from Bacillus subtilis (strain 168).